The chain runs to 767 residues: Probable beta-glucosidase K (767 aa).

An N-linked (GlcNAc...) asparagine glycan is attached at Asn19. Asp232 is a catalytic residue. N-linked (GlcNAc...) asparagine glycans are attached at residues Asn324, Asn477, and Asn749. One can recognise a PA14 domain in the interval 405–552 (EGQPGLRMRF…DPERAIARAV (148 aa)). The tract at residues 727-767 (LGRRGRSGSSPAVYRGRSNNVVNRTSHQGAQRISKGGFAAR) is disordered. Polar residues predominate over residues 743–757 (RSNNVVNRTSHQGAQ).

The protein belongs to the glycosyl hydrolase 3 family.

It is found in the secreted. It carries out the reaction Hydrolysis of terminal, non-reducing beta-D-glucosyl residues with release of beta-D-glucose.. It participates in glycan metabolism; cellulose degradation. Beta-glucosidases are one of a number of cellulolytic enzymes involved in the degradation of cellulosic biomass. Catalyzes the last step releasing glucose from the inhibitory cellobiose. The polypeptide is Probable beta-glucosidase K (bglK) (Aspergillus fumigatus (strain ATCC MYA-4609 / CBS 101355 / FGSC A1100 / Af293) (Neosartorya fumigata)).